Consider the following 358-residue polypeptide: tRNA (guanine-N(7)-)-methyltransferase (358 aa).

The disordered stretch occupies residues 1 to 29 (MTPPPPKRQKRDEYRKATAEATSQSGASD). Residues glycine 99 and 122-123 (EI) contribute to the S-adenosyl-L-methionine site. Over residues 151–186 (TATAASETPSQQQAQIDGKQANANAAADAASPAPST) the composition is skewed to low complexity. The disordered stretch occupies residues 151 to 194 (TATAASETPSQQQAQIDGKQANANAAADAASPAPSTDTEHMPTT). S-adenosyl-L-methionine-binding positions include 209 to 210 (NT) and cysteine 229. Aspartate 232 is an active-site residue. 330 to 332 (TEE) contributes to the S-adenosyl-L-methionine binding site.

This sequence belongs to the class I-like SAM-binding methyltransferase superfamily. TrmB family. Forms a complex with trm82.

Its subcellular location is the nucleus. It catalyses the reaction guanosine(46) in tRNA + S-adenosyl-L-methionine = N(7)-methylguanosine(46) in tRNA + S-adenosyl-L-homocysteine. The protein operates within tRNA modification; N(7)-methylguanine-tRNA biosynthesis. Catalyzes the formation of N(7)-methylguanine at position 46 (m7G46) in tRNA. The chain is tRNA (guanine-N(7)-)-methyltransferase (trm8) from Aspergillus fumigatus (strain CBS 144.89 / FGSC A1163 / CEA10) (Neosartorya fumigata).